The chain runs to 207 residues: MAKESTTIDVGEPNTMTKSTSHVVVDEKKKKGFVAAAAGGGYKRGLAVFDFLLRLAAIGITIGASSVMFTAEETLPFFTQFLQFQAGYDDFPTFQFFVIAIAIVASYLVLSLPFSIVTIVRPLAVAPRLILLISDTVVLTLTTAAAAAAASIVYLAHNGNTNTNWLPICQQFGDFCQTASTAVVAASISVAFFVLLIVISAIALKRH.

N-acetylalanine is present on Ala-2. Topologically, residues 2–44 (AKESTTIDVGEPNTMTKSTSHVVVDEKKKKGFVAAAAGGGYKR) are cytoplasmic. Residues 45–65 (GLAVFDFLLRLAAIGITIGAS) traverse the membrane as a helical segment. Topologically, residues 66 to 95 (SVMFTAEETLPFFTQFLQFQAGYDDFPTFQ) are extracellular. A helical membrane pass occupies residues 96–116 (FFVIAIAIVASYLVLSLPFSI). The Cytoplasmic portion of the chain corresponds to 117–128 (VTIVRPLAVAPR). The helical transmembrane segment at 129–149 (LILLISDTVVLTLTTAAAAAA) threads the bilayer. Residues 150 to 181 (ASIVYLAHNGNTNTNWLPICQQFGDFCQTAST) are Extracellular-facing. Residues 182-202 (AVVAASISVAFFVLLIVISAI) form a helical membrane-spanning segment. Residues 203 to 207 (ALKRH) are Cytoplasmic-facing.

The protein belongs to the Casparian strip membrane proteins (CASP) family. In terms of assembly, homodimer and heterodimers.

It localises to the cell membrane. Regulates membrane-cell wall junctions and localized cell wall deposition. Required for establishment of the Casparian strip membrane domain (CSD) and the subsequent formation of Casparian strips, a cell wall modification of the root endodermis that determines an apoplastic barrier between the intraorganismal apoplasm and the extraorganismal apoplasm and prevents lateral diffusion. The protein is Casparian strip membrane protein 1 of Raphanus raphanistrum (Wild radish).